Here is a 262-residue protein sequence, read N- to C-terminus: MVQQGFSIDLILARNREEAPDGKDSVSSRPHIPCAPQPLAPTKYAKEIPRRKDGQEQGEITSFQCSSEEARNRQFSNPSLPALHRSSGSSDEFSPAGSEDDGTESSGRNSQENDTEHRSKSPKSDLQRRLRTAFTPQQITRLEQAFNKQRYLGASERKKLATSLQLSEIQVKTWFQNRRMKLKRQIQDQQHSMVPPPVCYPQTFSYYPGGFPVPLNSGSFYQPPAHPFQAPQHSFIPQPLHHHMRMSAHQEQFPPLFGAQYM.

2 stretches are compositionally biased toward basic and acidic residues: residues arginine 16–valine 26 and tyrosine 44–glutamine 55. The tract at residues arginine 16–arginine 129 is disordered. Polar residues predominate over residues glycine 58 to serine 79. A compositionally biased stretch (basic and acidic residues) spans aspartate 114–arginine 128. The segment at residues glutamine 127–isoleucine 186 is a DNA-binding region (homeobox).

It localises to the nucleus. In terms of biological role, transcriptional repressor. Cooperates with vent2 in a ventral signaling pathway downstream of bmp4, which antagonizes the Spemann organizer and dorsal mesoderm formation, and leads to ventral mesoderm formation. Acts downstream of bmp4 to repress transcription of foxa4-B/XFD-1'. Binds to DNA with preference for the target sequence 5'-CTATT[T/C]G-3'. Also binds 5'-TGCATTTTG-3' at a lower frequency, and occasionally 5'-TTGATC-3'. Binds to the homeobox 2 (HBX2) repressor element in the promoter of the myf5 gene. Cooperates with vent2 to repress myf5 expression in the ventral domain. The polypeptide is Homeobox protein vent1 (Xenopus tropicalis (Western clawed frog)).